Reading from the N-terminus, the 210-residue chain is Large ribosomal subunit protein uL3 (210 aa).

Residues 125–151 (RHGQSRGPMSHGSRYHRRPGSMGPVAP) form a disordered region.

The protein belongs to the universal ribosomal protein uL3 family. As to quaternary structure, part of the 50S ribosomal subunit. Forms a cluster with proteins L14 and L19.

One of the primary rRNA binding proteins, it binds directly near the 3'-end of the 23S rRNA, where it nucleates assembly of the 50S subunit. The sequence is that of Large ribosomal subunit protein uL3 from Bacillus cereus (strain Q1).